Consider the following 1234-residue polypeptide: Transcription-repair-coupling factor (1234 aa).

Residues 663 to 824 enclose the Helicase ATP-binding domain; it reads DMEKPIPMDR…LAGIREMSTI (162 aa). ATP is bound at residue 676–683; the sequence is GDVGYGKT. The DEEQ box signature appears at 777–780; it reads DEEQ. Positions 842-999 constitute a Helicase C-terminal domain; sequence DDKQIAAALR…GMAVALKDLE (158 aa). Residues 1207-1234 form a disordered region; sequence RQHIGITNPSPPGEDGRGRNTTIKERQP. The span at 1220-1234 shows a compositional bias: basic and acidic residues; that stretch reads EDGRGRNTTIKERQP.

In the N-terminal section; belongs to the UvrB family. It in the C-terminal section; belongs to the helicase family. RecG subfamily.

It is found in the cytoplasm. Couples transcription and DNA repair by recognizing RNA polymerase (RNAP) stalled at DNA lesions. Mediates ATP-dependent release of RNAP and its truncated transcript from the DNA, and recruitment of nucleotide excision repair machinery to the damaged site. This chain is Transcription-repair-coupling factor, found in Mycobacterium bovis (strain ATCC BAA-935 / AF2122/97).